The sequence spans 482 residues: Cytochrome c-552 (482 aa).

A signal peptide spans 1–26; that stretch reads MIKVSNALQRILIGAALALFGGGAQA. Histidine 98 is a binding site for heme c. Heme contacts are provided by cysteine 126, cysteine 129, and lysine 130. Positions 164, 167, 168, 213, 216, and 217 each coordinate heme c. Ca(2+)-binding residues include glutamate 219, tyrosine 220, lysine 265, and glutamine 267. A substrate-binding site is contributed by tyrosine 220. Substrate is bound at residue histidine 268. Positions 279, 286, 289, 290, 305, 318, 321, 322, and 397 each coordinate heme c.

This sequence belongs to the cytochrome c-552 family. The cofactor is Ca(2+). Requires heme c as cofactor.

The protein resides in the periplasm. The catalysed reaction is 6 Fe(III)-[cytochrome c] + NH4(+) + 2 H2O = 6 Fe(II)-[cytochrome c] + nitrite + 8 H(+). The protein operates within nitrogen metabolism; nitrate reduction (assimilation). Catalyzes the reduction of nitrite to ammonia, consuming six electrons in the process. This Edwardsiella ictaluri (strain 93-146) protein is Cytochrome c-552.